An 838-amino-acid chain; its full sequence is Outer membrane usher protein YraJ (838 aa).

The signal sequence occupies residues 1–40; that stretch reads MPQRHHQGHKRTPKQLALIIKRCLPMVLTGSGMLCTTANA. A disulfide bond links C815 and C837.

The protein belongs to the fimbrial export usher family.

It localises to the cell outer membrane. Functionally, part of the yraHIJK fimbrial operon. Could contribute to adhesion to various surfaces in specific environmental niches. Increases adhesion to eukaryotic T24 bladder epithelial cells in the absence of fim operon. Probably involved in the export and assembly of fimbrial subunits across the outer membrane. This is Outer membrane usher protein YraJ (yraJ) from Escherichia coli (strain K12).